We begin with the raw amino-acid sequence, 115 residues long: Basic leucine zipper transcriptional factor ATF-like (115 aa).

Residues 1–60 (MQQESDRNEQGYSSSPPSSNKQDSSDDTKKNHRREKNRIAAQKSRQRQTEKADSLHIESE) are disordered. Residues 13–22 (SSSPPSSNKQ) show a composition bias toward low complexity. Positions 27–90 (DTKKNHRREK…KYLTCVLSTH (64 aa)) constitute a bZIP domain. The segment at 29 to 51 (KKNHRREKNRIAAQKSRQRQTEK) is basic motif. Residues 47 to 60 (RQTEKADSLHIESE) show a composition bias toward basic and acidic residues. The segment at 55–83 (LHIESENLERLNSALRGEISGLREELKYL) is leucine-zipper.

The protein belongs to the bZIP family.

Its subcellular location is the nucleus. The protein localises to the cytoplasm. AP-1 family transcription factor that controls the differentiation of lineage-specific cells in the immune system: specifically mediates the differentiation of T-helper 17 cells (Th17), follicular T-helper cells (TfH), CD8(+) dendritic cells and class-switch recombination (CSR) in B-cells. The protein is Basic leucine zipper transcriptional factor ATF-like (batf) of Xenopus laevis (African clawed frog).